Consider the following 193-residue polypeptide: Oligoribonuclease (193 aa).

The Exonuclease domain maps to 14–177; that stretch reads LIWIDLEMTG…SDIYDSIAEL (164 aa). Tyr-135 is a catalytic residue.

It belongs to the oligoribonuclease family.

The protein localises to the cytoplasm. In terms of biological role, 3'-to-5' exoribonuclease specific for small oligoribonucleotides. The polypeptide is Oligoribonuclease (Xylella fastidiosa (strain Temecula1 / ATCC 700964)).